Reading from the N-terminus, the 82-residue chain is Colonization factor (82 aa).

The N-terminal stretch at 1–33 (MFSSLKNKLNTFKSTLSLGVFLLFSAFANQALA) is a signal peptide.

The protein resides in the secreted. This chain is Colonization factor (cep), found in Vibrio cholerae serotype O1 (strain ATCC 39315 / El Tor Inaba N16961).